A 546-amino-acid polypeptide reads, in one-letter code: Chaperonin GroEL (546 aa).

ATP is bound by residues 29 to 32 (TLGP), Lys-50, 86 to 90 (DGTTT), Gly-414, and Asp-494. Residues 525-546 (KKESAAPAMPGHDGMGGMGGMM) are disordered. Over residues 537–546 (DGMGGMGGMM) the composition is skewed to gly residues.

It belongs to the chaperonin (HSP60) family. As to quaternary structure, forms a cylinder of 14 subunits composed of two heptameric rings stacked back-to-back. Interacts with the co-chaperonin GroES.

Its subcellular location is the cytoplasm. It catalyses the reaction ATP + H2O + a folded polypeptide = ADP + phosphate + an unfolded polypeptide.. Functionally, together with its co-chaperonin GroES, plays an essential role in assisting protein folding. The GroEL-GroES system forms a nano-cage that allows encapsulation of the non-native substrate proteins and provides a physical environment optimized to promote and accelerate protein folding. The polypeptide is Chaperonin GroEL (Bdellovibrio bacteriovorus (strain ATCC 15356 / DSM 50701 / NCIMB 9529 / HD100)).